The sequence spans 967 residues: Phosphoenolpyruvate carboxylase 2 (967 aa).

Serine 13 carries the post-translational modification Phosphoserine. Residues histidine 174 and lysine 602 contribute to the active site.

This sequence belongs to the PEPCase type 1 family. Homotetramer. Requires Mg(2+) as cofactor.

The protein resides in the cytoplasm. The catalysed reaction is oxaloacetate + phosphate = phosphoenolpyruvate + hydrogencarbonate. Its pathway is photosynthesis; C3 acid pathway. By light-reversible phosphorylation. Its function is as follows. Through the carboxylation of phosphoenolpyruvate (PEP) it forms oxaloacetate, a four-carbon dicarboxylic acid source for the tricarboxylic acid cycle. The protein is Phosphoenolpyruvate carboxylase 2 (PEP4) of Zea mays (Maize).